We begin with the raw amino-acid sequence, 209 residues long: Uracil phosphoribosyltransferase (209 aa).

5-phospho-alpha-D-ribose 1-diphosphate contacts are provided by residues Arg-79, Arg-104, and Asp-131–Ser-139. Uracil is bound by residues Ile-194 and Gly-199 to Ala-201. Asp-200 contacts 5-phospho-alpha-D-ribose 1-diphosphate.

Belongs to the UPRTase family. Mg(2+) is required as a cofactor.

The enzyme catalyses UMP + diphosphate = 5-phospho-alpha-D-ribose 1-diphosphate + uracil. It functions in the pathway pyrimidine metabolism; UMP biosynthesis via salvage pathway; UMP from uracil: step 1/1. Its activity is regulated as follows. Allosterically activated by GTP. Its function is as follows. Catalyzes the conversion of uracil and 5-phospho-alpha-D-ribose 1-diphosphate (PRPP) to UMP and diphosphate. In Staphylococcus haemolyticus (strain JCSC1435), this protein is Uracil phosphoribosyltransferase.